A 1871-amino-acid polypeptide reads, in one-letter code: Protein RRP5 homolog (1871 aa).

Residues 1-62 form a disordered region; the sequence is MANLEESFPR…KTKKLKIEKR (62 aa). Residue Ala2 is modified to N-acetylalanine. Residue Ser7 is modified to Phosphoserine. Residues 43 to 59 show a composition bias toward basic residues; sequence KRKKSQKGPAKTKKLKI. 4 consecutive S1 motif domains span residues 83–171, 187–258, 281–346, and 365–436; these read GMRI…LSLN, GMLL…LSVG, GLVV…LSLR, and GAVL…LSLR. The residue at position 438 (Ser438) is a Phosphoserine. 4 consecutive S1 motif domains span residues 453-522, 542-611, 636-707, and 729-798; these read GAVV…MTLK, GLQT…LSFK, GQLV…LCRK, and GMLL…LSLR. The segment at 998–1018 is disordered; sequence AAKRTMRPTQKDSETVDEDEE. A Glycyl lysine isopeptide (Lys-Gly) (interchain with G-Cter in SUMO1) cross-link involves residue Lys1030. 4 S1 motif domains span residues 1036–1109, 1149–1222, 1230–1298, and 1324–1396; these read GDMV…ISHP, GQTV…LSLT, GEVA…LSLR, and GQLL…LSFL. A phosphoserine mark is found at Ser1360 and Ser1362. Disordered regions lie at residues 1395–1531 and 1549–1586; these read FLPG…APRL and ALPPLAESSDSEEDEKPHQATIKKSKKERELEKQKAEK. Lys1416 is covalently cross-linked (Glycyl lysine isopeptide (Lys-Gly) (interchain with G-Cter in SUMO2)). 2 stretches are compositionally biased toward basic and acidic residues: residues 1416–1459 and 1469–1484; these read KQEE…EKQQ and GGRECRESGSEQERVS. A phosphoserine mark is found at Ser1476, Ser1493, and Ser1498. The span at 1575 to 1586 shows a compositional bias: basic and acidic residues; the sequence is KERELEKQKAEK. HAT repeat units follow at residues 1599-1631, 1705-1737, 1775-1807, and 1809-1844; these read GRQPESADDFDRLVLSSPNSSILWLQYMAFHLQ, EKFQEAGELYNRMLKRFRQEKAVWIKYGAFLLR, GDAERAKAIFENTLSTYPKRTDVWSVYIDMTIK, and GSQKDVRDIFERVIHLSLAPKRMKFFFKRYLDYEKQ.

Interacts with NF-kappa-B p50/NFKB1 and NF-kappa-B p65/RELA.

Its subcellular location is the nucleus. The protein resides in the nucleolus. In terms of biological role, essential for the generation of mature 18S rRNA, specifically necessary for cleavages at sites A0, 1 and 2 of the 47S precursor. Directly interacts with U3 snoRNA. Involved in the biogenesis of rRNA. The sequence is that of Protein RRP5 homolog (PDCD11) from Homo sapiens (Human).